The chain runs to 61 residues: Sodium/potassium-transporting ATPase subunit gamma (61 aa).

A helical membrane pass occupies residues 24–44; sequence KGGLIFAAIAFVVGMLIIFSG.

The protein belongs to the FXYD family. In terms of assembly, regulatory subunit of the sodium/potassium-transporting ATPase which is composed of a catalytic alpha subunit, an auxiliary non-catalytic beta subunit and an additional regulatory subunit.

The protein resides in the membrane. In terms of biological role, may be involved in forming the receptor site for cardiac glycoside binding or may modulate the transport function of the sodium ATPase. The polypeptide is Sodium/potassium-transporting ATPase subunit gamma (fxyd2) (Xenopus laevis (African clawed frog)).